The primary structure comprises 2245 residues: Basic helix-loop-helix domain-containing protein USF3 (2245 aa).

Residues 1–28 are disordered; that stretch reads MPEMTENETPTKKQHRKKNRETHNAVER. The region spanning 18-69 is the bHLH domain; that stretch reads KNRETHNAVERHRKKKINAGINRIGELIPCSPALKQSKNMILDQAFKYITEL. Residues 77–112 adopt a coiled-coil conformation; sequence LLNGGNNEQAEEIKKLRKQLEEIQKENGRYIELLKA. Disordered regions lie at residues 271-290, 447-470, 881-900, 906-933, 1015-1041, 1164-1238, 1307-1331, 1460-1624, 1636-1664, 1736-1764, 1777-1815, 1834-1859, and 1891-2031; these read LHTC…QENP, SQTP…TSNH, SKSK…VTSE, AAKS…ALSD, KNPQ…IVDS, PSEA…SITS, IPNS…AKRA, IKQQ…VSGH, LEQQ…ERNR, TFKP…GNPV, ISQN…ENTC, GSQR…YNCP, and STLN…QPAT. The segment covering 273–288 has biased composition (polar residues); it reads TCLNDQNSSENKNGQE. A compositionally biased stretch (low complexity) spans 881–896; sequence SKSKSAEKSSPPSQES. Residues 912–925 are compositionally biased toward polar residues; that stretch reads STPNLQQETSQDKP. Polar residues-rich tracts occupy residues 1185 to 1202 and 1219 to 1238; these read GTGQ…QGSI and IKTS…SITS. Positions 1319-1331 are enriched in basic and acidic residues; sequence PSHESRKDSAKRA. Residues 1462–1478 are compositionally biased toward low complexity; it reads QQQQQQQQQQQQQQQQQ. Polar residues-rich tracts occupy residues 1501 to 1520 and 1528 to 1538; these read SVHS…QEVQ and VQGTQTSQLSL. Over residues 1560-1569 the composition is skewed to low complexity; it reads QQMQQQMQQH. Residues 1570–1585 are compositionally biased toward polar residues; the sequence is FGSSQTEKSCENPSTS. The span at 1593–1624 shows a compositional bias: low complexity; that stretch reads QNHLNQDIMHQQQDVGSRQQGSGVSSEHVSGH. Residues 1636 to 1654 are compositionally biased toward polar residues; sequence LEQQMVSQPSIVTRSSDMT. Composition is skewed to polar residues over residues 1904–1923 and 1998–2007; these read GDIQ…SNPM and SGNQRQSTVF.

The protein localises to the nucleus. Involved in the negative regulation of epithelial-mesenchymal transition, the process by which epithelial cells lose their polarity and adhesion properties to become mesenchymal cells with enhanced migration and invasive properties. The sequence is that of Basic helix-loop-helix domain-containing protein USF3 from Homo sapiens (Human).